An 80-amino-acid polypeptide reads, in one-letter code: RNA-binding protein KhpA (80 aa).

Residues 33-80 (GRTVEVHVHPDDLGKVIGRGGRTATALRTLVAGIGGRGIRVDVVDTDQ) form the KH domain.

This sequence belongs to the KhpA RNA-binding protein family.

The protein localises to the cytoplasm. A probable RNA-binding protein. This Mycobacterium bovis (strain ATCC BAA-935 / AF2122/97) protein is RNA-binding protein KhpA.